The primary structure comprises 132 residues: Global transcriptional regulator Spx 2 (132 aa).

Cys-10 and Cys-13 are joined by a disulfide.

This sequence belongs to the ArsC family. Spx subfamily. In terms of assembly, interacts with the C-terminal domain of the alpha subunit of the RNAP.

Its subcellular location is the cytoplasm. In terms of biological role, global transcriptional regulator that plays a key role in stress response and exerts either positive or negative regulation of genes. Acts by interacting with the C-terminal domain of the alpha subunit of the RNA polymerase (RNAP). This interaction can enhance binding of RNAP to the promoter region of target genes and stimulate their transcription, or block interaction of RNAP with activator. This Lactococcus lactis subsp. lactis (strain IL1403) (Streptococcus lactis) protein is Global transcriptional regulator Spx 2.